Reading from the N-terminus, the 208-residue chain is Thymidylate kinase (208 aa).

Residue 12-19 (GVDGAGKS) participates in ATP binding.

It belongs to the thymidylate kinase family.

The enzyme catalyses dTMP + ATP = dTDP + ADP. Phosphorylation of dTMP to form dTDP in both de novo and salvage pathways of dTTP synthesis. This Bordetella bronchiseptica (strain ATCC BAA-588 / NCTC 13252 / RB50) (Alcaligenes bronchisepticus) protein is Thymidylate kinase.